The following is a 375-amino-acid chain: Alcohol dehydrogenase 1A (375 aa).

Serine 2 is modified (N-acetylserine). Serine 23 carries the phosphoserine modification. Position 35 is a phosphotyrosine (tyrosine 35). A Zn(2+)-binding site is contributed by cysteine 47. NAD(+) is bound at residue 48-52; sequence GTDDH. Zn(2+) is bound by residues histidine 68, cysteine 98, cysteine 101, cysteine 104, cysteine 112, and cysteine 175. NAD(+) contacts are provided by residues 200–205, aspartate 224, lysine 229, isoleucine 270, 293–295, 318–320, and arginine 370; these read GLGGVG, VGV, and AVY.

It belongs to the zinc-containing alcohol dehydrogenase family. In terms of assembly, dimer of identical or heterodimer of closely related subunits alpha, beta, or gamma that are encoded by genes ADH1A, ADH1B, and ADH1C, respectively. Requires Zn(2+) as cofactor.

The protein resides in the cytoplasm. It carries out the reaction a primary alcohol + NAD(+) = an aldehyde + NADH + H(+). The enzyme catalyses a secondary alcohol + NAD(+) = a ketone + NADH + H(+). It catalyses the reaction butan-1-ol + NAD(+) = butanal + NADH + H(+). The catalysed reaction is 1-propanol + NAD(+) = propanal + NADH + H(+). It carries out the reaction propan-2-ol + NAD(+) = acetone + NADH + H(+). In terms of biological role, alcohol dehydrogenase. Oxidizes primary as well as secondary alcohols. Ethanol is a very poor substrate. In Macaca mulatta (Rhesus macaque), this protein is Alcohol dehydrogenase 1A (ADH1A).